Reading from the N-terminus, the 285-residue chain is HTH-type transcriptional regulator MurR (285 aa).

Residues 1–77 (MLYLTKISNA…MALIGEYSAS (77 aa)) enclose the HTH rpiR-type domain. Positions 37–56 (SRQMAKQLGISQSSIVKFAQ) form a DNA-binding region, H-T-H motif. The SIS domain maps to 128–279 (IIEVISKAPF…SLKMIQRSSE (152 aa)).

In terms of assembly, homotetramer.

Its pathway is amino-sugar metabolism; N-acetylmuramate degradation [regulation]. In terms of biological role, represses the expression of the murPQ operon involved in the uptake and degradation of N-acetylmuramic acid (MurNAc). Binds to two adjacent inverted repeats within the operator region. MurNAc 6-phosphate, the substrate of MurQ, is the specific inducer that weakens binding of MurR to the operator. The chain is HTH-type transcriptional regulator MurR from Shigella boydii serotype 18 (strain CDC 3083-94 / BS512).